The sequence spans 306 residues: Acetyl-coenzyme A carboxylase carboxyl transferase subunit beta (306 aa).

The 270-residue stretch at 25–294 folds into the CoA carboxyltransferase N-terminal domain; sequence LWIKDPTSGE…VFNPSDPSPT (270 aa). The disordered stretch occupies residues 286-306; sequence FNPSDPSPTDSQTSLSTTKAA. A compositionally biased stretch (low complexity) spans 288-306; sequence PSDPSPTDSQTSLSTTKAA.

The protein belongs to the AccD/PCCB family. In terms of assembly, acetyl-CoA carboxylase is a heterohexamer composed of biotin carboxyl carrier protein (AccB), biotin carboxylase (AccC) and two subunits each of ACCase subunit alpha (AccA) and ACCase subunit beta (AccD).

It localises to the cytoplasm. It carries out the reaction N(6)-carboxybiotinyl-L-lysyl-[protein] + acetyl-CoA = N(6)-biotinyl-L-lysyl-[protein] + malonyl-CoA. Its pathway is lipid metabolism; malonyl-CoA biosynthesis; malonyl-CoA from acetyl-CoA: step 1/1. Component of the acetyl coenzyme A carboxylase (ACC) complex. Biotin carboxylase (BC) catalyzes the carboxylation of biotin on its carrier protein (BCCP) and then the CO(2) group is transferred by the transcarboxylase to acetyl-CoA to form malonyl-CoA. This is Acetyl-coenzyme A carboxylase carboxyl transferase subunit beta from Bartonella grahamii (strain as4aup).